Here is a 161-residue protein sequence, read N- to C-terminus: MKLSDIADNAGARKKRMRVGRGIGSGKGKTSGRGGKGQTARSGVRIKGFEGGQMPMHRRLPKRGFNNIFALDFVEINLDRIQQAIDAKKLDAGSVINAESLVKSGALRRSKDGVRLLGRGELKAKINIEVYGASKSAIAAVEKAGGTVKILAPAKDEGEAA.

The segment at 1–43 is disordered; that stretch reads MKLSDIADNAGARKKRMRVGRGIGSGKGKTSGRGGKGQTARSG. Over residues 21–37 the composition is skewed to gly residues; the sequence is RGIGSGKGKTSGRGGKG.

The protein belongs to the universal ribosomal protein uL15 family. In terms of assembly, part of the 50S ribosomal subunit.

Functionally, binds to the 23S rRNA. This Bradyrhizobium sp. (strain ORS 278) protein is Large ribosomal subunit protein uL15.